Reading from the N-terminus, the 455-residue chain is tRNA modification GTPase MnmE (455 aa).

Positions 24, 81, and 121 each coordinate (6S)-5-formyl-5,6,7,8-tetrahydrofolate. Residues 217–378 form the TrmE-type G domain; the sequence is GMKVVIAGRP…LKEHLKDIMG (162 aa). N227 is a binding site for K(+). Residues 227–232, 246–252, 271–274, and 336–339 contribute to the GTP site; these read NAGKSS, TDIAGTT, DTAG, and NKAD. S231 lines the Mg(2+) pocket. Residues T246, I248, and T251 each coordinate K(+). Residue T252 participates in Mg(2+) binding. K455 is a binding site for (6S)-5-formyl-5,6,7,8-tetrahydrofolate.

Belongs to the TRAFAC class TrmE-Era-EngA-EngB-Septin-like GTPase superfamily. TrmE GTPase family. In terms of assembly, homodimer. Heterotetramer of two MnmE and two MnmG subunits. K(+) serves as cofactor.

The protein localises to the cytoplasm. In terms of biological role, exhibits a very high intrinsic GTPase hydrolysis rate. Involved in the addition of a carboxymethylaminomethyl (cmnm) group at the wobble position (U34) of certain tRNAs, forming tRNA-cmnm(5)s(2)U34. This is tRNA modification GTPase MnmE from Psychromonas ingrahamii (strain DSM 17664 / CCUG 51855 / 37).